Consider the following 86-residue polypeptide: Small ribosomal subunit protein bS16c (86 aa).

It belongs to the bacterial ribosomal protein bS16 family.

Its subcellular location is the plastid. It is found in the chloroplast. This is Small ribosomal subunit protein bS16c from Liriodendron tulipifera (Tuliptree).